The following is a 563-amino-acid chain: Arginine--tRNA ligase (563 aa).

The 'HIGH' region motif lies at 121–131 (PNIAKPFSIGH).

Belongs to the class-I aminoacyl-tRNA synthetase family. In terms of assembly, monomer.

It is found in the cytoplasm. It catalyses the reaction tRNA(Arg) + L-arginine + ATP = L-arginyl-tRNA(Arg) + AMP + diphosphate. This chain is Arginine--tRNA ligase, found in Streptococcus pneumoniae (strain CGSP14).